The sequence spans 869 residues: Protein translocase subunit SecA (869 aa).

ATP-binding positions include Gln-85, 103–107 (GEGKT), and Asp-508.

This sequence belongs to the SecA family. As to quaternary structure, monomer and homodimer. Part of the essential Sec protein translocation apparatus which comprises SecA, SecYEG and auxiliary proteins SecDF. Other proteins may also be involved.

The protein localises to the cell membrane. The protein resides in the cytoplasm. The enzyme catalyses ATP + H2O + cellular proteinSide 1 = ADP + phosphate + cellular proteinSide 2.. In terms of biological role, part of the Sec protein translocase complex. Interacts with the SecYEG preprotein conducting channel. Has a central role in coupling the hydrolysis of ATP to the transfer of proteins into and across the cell membrane, serving as an ATP-driven molecular motor driving the stepwise translocation of polypeptide chains across the membrane. The sequence is that of Protein translocase subunit SecA from Deinococcus deserti (strain DSM 17065 / CIP 109153 / LMG 22923 / VCD115).